Here is a 502-residue protein sequence, read N- to C-terminus: Probable glycine dehydrogenase (decarboxylating) subunit 2 (502 aa).

At Lys273 the chain carries N6-(pyridoxal phosphate)lysine.

The protein belongs to the GcvP family. C-terminal subunit subfamily. The glycine cleavage system is composed of four proteins: P, T, L and H. In this organism, the P 'protein' is a heterodimer of two subunits. It depends on pyridoxal 5'-phosphate as a cofactor.

It carries out the reaction N(6)-[(R)-lipoyl]-L-lysyl-[glycine-cleavage complex H protein] + glycine + H(+) = N(6)-[(R)-S(8)-aminomethyldihydrolipoyl]-L-lysyl-[glycine-cleavage complex H protein] + CO2. Functionally, the glycine cleavage system catalyzes the degradation of glycine. The P protein binds the alpha-amino group of glycine through its pyridoxal phosphate cofactor; CO(2) is released and the remaining methylamine moiety is then transferred to the lipoamide cofactor of the H protein. The polypeptide is Probable glycine dehydrogenase (decarboxylating) subunit 2 (Thermococcus kodakarensis (strain ATCC BAA-918 / JCM 12380 / KOD1) (Pyrococcus kodakaraensis (strain KOD1))).